Reading from the N-terminus, the 442-residue chain is Pentatricopeptide repeat-containing protein At2g27800, mitochondrial (442 aa).

A mitochondrion-targeting transit peptide spans 1–67 (MSATRSTFLG…SFLPSIHVRF (67 aa)). PPR repeat units lie at residues 206–236 (NENL…MVTS), 244–286 (TIRT…GIEP), 287–322 (DVFA…DCEP), 323–357 (NSFT…GFVP), 358–392 (NGKS…GRVV), and 393–427 (DFIS…QLVD).

It belongs to the PPR family. P subfamily.

The protein localises to the mitochondrion. The chain is Pentatricopeptide repeat-containing protein At2g27800, mitochondrial from Arabidopsis thaliana (Mouse-ear cress).